The chain runs to 177 residues: Inner membrane-spanning protein YciB (177 aa).

The next 5 helical transmembrane spans lie at 23–43 (MFVA…WAWF), 50–70 (TMQW…LLLH), 73–93 (HFIM…LLIS), 119–139 (LTWA…FVAY), and 149–169 (FKLF…SLFL).

Belongs to the YciB family.

The protein localises to the cell inner membrane. Functionally, plays a role in cell envelope biogenesis, maintenance of cell envelope integrity and membrane homeostasis. This chain is Inner membrane-spanning protein YciB, found in Chromobacterium violaceum (strain ATCC 12472 / DSM 30191 / JCM 1249 / CCUG 213 / NBRC 12614 / NCIMB 9131 / NCTC 9757 / MK).